The primary structure comprises 735 residues: MHCGLLEEPDMDSTESWIERCLNESENKRYSSHTSLGNVSNDENEEKENNRASKPHSTPATLQWLEENYEIAEGVCIPRSALYMHYLDFCEKNDTQPVNAASFGKIIRQQFPQLTTRRLGTRGQSKYHYYGIAVKESSQYYDVMYSKKGAAWVSETGKREVTKQTVAYSPRSKLGTLLPDFPNVKDLNLPASLPEEKVSTFIMMYRTHCQRILDTVIRANFDEVQSFLLHFWQGMPPHMLPVLGSSTVVNIVGVCDSILYKAISGVLMPTVLQALPDSLTQVIRKFAKQLDEWLKVALHDLPENLRNIKFELSRRFSQILRRQTSLNHLCQASRTVIHSADITFQMLEDWRNVDLSSITKQTLYTMEDSRDEHRRLIIQLYQEFDHLLEEQSPIESYIEWLDTMVDRCVVKVAAKRQGSLKKVAQQFLLMWSCFGTRVIRDMTLHSAPSFGSFHLIHLMFDDYVLYLLESLHCQERANELMRAMKGEGSTAEAQEEIILTEATPPTPSPGPSFSPAKSATSVEVPPPSSPVSNPSPEYTGLSTAGAMQSYTWSLTYTVTTAAGSPAENSQQLPCMRSTHMPSSSVTHRIPVYSHREEHGYTGSYNYGSYGNQHPHPLQNQYPALPHDTAISGPLHYSPYHRSSAQYPFNSPTSRMEPCLMSSTPRLHPTPVTPRWPEVPTANACYTSPSVHSTRYGNSSDMYTPLTTRRNSEYEHMQHFPGFAYINGEASTGWAK.

The tract at residues 27–59 (NKRYSSHTSLGNVSNDENEEKENNRASKPHSTP) is disordered. The span at 32–41 (SHTSLGNVSN) shows a compositional bias: polar residues. The DNA-binding element occupies 44–126 (NEEKENNRAS…RRLGTRGQSK (83 aa)). The RFX-type winged-helix DNA-binding region spans 61-136 (TLQWLEENYE…YHYYGIAVKE (76 aa)). A necessary for dimerization region spans residues 315–487 (RFSQILRRQT…NELMRAMKGE (173 aa)). The segment at 501–538 (EATPPTPSPGPSFSPAKSATSVEVPPPSSPVSNPSPEY) is disordered.

Belongs to the RFX family. In terms of assembly, homodimer. Heterodimer with RFX2 and RFX3. Binds DNA. Interacts with GPS2. As to expression, isoform 1: Brain-specific. Isoform 2: Testis-specific. Isoform 1: Highly expressed in the suprachiasmatic nucleus, the central pacemaker site of the circadian clock (at protein level).

It localises to the nucleus. Functionally, transcription factor that plays a role in early brain development. May activate transcription by interacting directly with the X-box. May activate transcription from CX3CL1 promoter through the X-box during brain development. May be required for neural tube ciliogenesis during embryogenesis. The protein is Transcription factor RFX4 (Rfx4) of Mus musculus (Mouse).